A 389-amino-acid chain; its full sequence is Phosphoribosylformylglycinamidine cyclo-ligase, chloroplastic (389 aa).

The N-terminal 58 residues, 1-58 (MEARILQSSSSCYSSLYAVNRSRFSSVSSPKPFSVSFAQTTRTRTRVLSMSKKDGRTD), are a transit peptide targeting the chloroplast. Positions 46-65 (RVLSMSKKDGRTDKDDDTDS) are disordered.

This sequence belongs to the AIR synthase family.

The protein resides in the plastid. Its subcellular location is the chloroplast. The enzyme catalyses 2-formamido-N(1)-(5-O-phospho-beta-D-ribosyl)acetamidine + ATP = 5-amino-1-(5-phospho-beta-D-ribosyl)imidazole + ADP + phosphate + H(+). It participates in purine metabolism; IMP biosynthesis via de novo pathway; 5-amino-1-(5-phospho-D-ribosyl)imidazole from N(2)-formyl-N(1)-(5-phospho-D-ribosyl)glycinamide: step 2/2. The chain is Phosphoribosylformylglycinamidine cyclo-ligase, chloroplastic (PUR5) from Arabidopsis thaliana (Mouse-ear cress).